The chain runs to 275 residues: Arylalkylamine N-acetyltransferase 1 (275 aa).

Acetyl-CoA-binding positions include 181-183 and 189-193; these read LSV and GLGIA. Positions 181 to 254 constitute an N-acetyltransferase domain; that stretch reads LSVDTNYRGL…GEVVFKPAAP (74 aa).

The protein belongs to the acetyltransferase family. AANAT subfamily. In the adult, expressed in the midgut portion of the thoracic segments and the frontal half of the abdomen (at protein level). Expressed in the epithelial cell layer facing the lumen of the gut (at protein level). In the brain, expressed in a sub-populations of neurons and astrocytes, and in a set of distinct stripes in the optic lobes (at protein level). Expressed mainly in serotonergic neurons but also in subsets of glutamatergic, GABAergic and cholinergic neurons (at protein level).

It is found in the cytoplasm. Its subcellular location is the nucleus. The enzyme catalyses a 2-arylethylamine + acetyl-CoA = an N-acetyl-2-arylethylamine + CoA + H(+). It carries out the reaction serotonin + acetyl-CoA = N-acetylserotonin + CoA + H(+). It catalyses the reaction dopamine + acetyl-CoA = N-acetyldopamine + CoA + H(+). The catalysed reaction is tyramine + acetyl-CoA = N-acetyltyramine + CoA + H(+). The enzyme catalyses octopamine + acetyl-CoA = N-acetyloctopamine + CoA + H(+). It carries out the reaction 5-methoxytryptamine + acetyl-CoA = melatonin + CoA + H(+). It catalyses the reaction 2-phenylethylamine + acetyl-CoA = N-(2-phenylethyl)acetamide + CoA + H(+). The catalysed reaction is noradrenaline + acetyl-CoA = N-acetylnoradrenaline + CoA + H(+). The enzyme catalyses tyramine + butanoyl-CoA = N-butanoyltyramine + CoA + H(+). It carries out the reaction tyramine + hexanoyl-CoA = N-hexanoyltyramine + CoA + H(+). It catalyses the reaction tryptamine + acetyl-CoA = N-acetyltryptamine + CoA + H(+). The catalysed reaction is dopamine + hexadecanoyl-CoA = N-hexadecanoyl-dopamine + CoA + H(+). The enzyme catalyses dopamine + (9Z)-octadecenoyl-CoA = N-(9Z-octadecanoyl)-dopamine + CoA + H(+). It carries out the reaction serotonin + hexadecanoyl-CoA = N-hexadecanoyl-serotonin + CoA + H(+). It catalyses the reaction serotonin + (9Z)-octadecenoyl-CoA = N-(9Z-octadecenoyl)-serotonin + CoA + H(+). The catalysed reaction is serotonin + octadecanoyl-CoA = N-octadecanoyl-serotonin + CoA + H(+). The enzyme catalyses serotonin + (5Z,8Z,11Z,14Z)-eicosatetraenoyl-CoA = N-[(5Z,8Z,11Z,14Z)-eicosatetraenoyl]-serotonin + CoA + H(+). It functions in the pathway aromatic compound metabolism; melatonin biosynthesis; melatonin from serotonin: step 1/2. With respect to regulation, inhibited by long-chain acyl-CoA thioesters, oleoyl-CoA (an analog of acetyl-CoA) and tyrosol (an analog of tyramine). In terms of biological role, catalyzes N-acetylation of tryptamine, tyramine, dopamine, serotonin and octopamine. In astrocytes, regulates sleep homeostasis by limiting the accumulation of serotonin and dopamine in the brain upon sleep deprivation. Is not essential for sclerotization. In Drosophila melanogaster (Fruit fly), this protein is Arylalkylamine N-acetyltransferase 1.